A 450-amino-acid polypeptide reads, in one-letter code: 3-phosphoshikimate 1-carboxyvinyltransferase (450 aa).

Residues lysine 28, serine 29, and arginine 33 each coordinate 3-phosphoshikimate. Lysine 28 serves as a coordination point for phosphoenolpyruvate. Phosphoenolpyruvate is bound by residues glycine 100 and arginine 128. Positions 173, 175, 326, and 353 each coordinate 3-phosphoshikimate. Glutamine 175 contributes to the phosphoenolpyruvate binding site. The active-site Proton acceptor is aspartate 326. Positions 357 and 402 each coordinate phosphoenolpyruvate.

Belongs to the EPSP synthase family. Monomer.

It localises to the cytoplasm. It carries out the reaction 3-phosphoshikimate + phosphoenolpyruvate = 5-O-(1-carboxyvinyl)-3-phosphoshikimate + phosphate. The protein operates within metabolic intermediate biosynthesis; chorismate biosynthesis; chorismate from D-erythrose 4-phosphate and phosphoenolpyruvate: step 6/7. Functionally, catalyzes the transfer of the enolpyruvyl moiety of phosphoenolpyruvate (PEP) to the 5-hydroxyl of shikimate-3-phosphate (S3P) to produce enolpyruvyl shikimate-3-phosphate and inorganic phosphate. The chain is 3-phosphoshikimate 1-carboxyvinyltransferase from Brucella melitensis biotype 2 (strain ATCC 23457).